The sequence spans 388 residues: UPF0229 protein BH1031 (388 aa).

Residues 80 to 117 (HVGQGDGDSQVGDVIARDPSAGQQGPGKGQGAGDQPGE) are disordered. Over residues 103–113 (QGPGKGQGAGD) the composition is skewed to gly residues.

Belongs to the UPF0229 family.

This is UPF0229 protein BH1031 from Halalkalibacterium halodurans (strain ATCC BAA-125 / DSM 18197 / FERM 7344 / JCM 9153 / C-125) (Bacillus halodurans).